The following is a 463-amino-acid chain: Glycine--tRNA ligase (463 aa).

2 residues coordinate substrate: R98 and E174. Residues 206 to 208, 216 to 221, 290 to 291, and 334 to 337 contribute to the ATP site; these read RNE, FRTREF, EL, and GADR. 221-225 is a binding site for substrate; it reads FEQME. Residue 330 to 334 participates in substrate binding; the sequence is EPSLG.

The protein belongs to the class-II aminoacyl-tRNA synthetase family. In terms of assembly, homodimer.

The protein resides in the cytoplasm. It carries out the reaction tRNA(Gly) + glycine + ATP = glycyl-tRNA(Gly) + AMP + diphosphate. In terms of biological role, catalyzes the attachment of glycine to tRNA(Gly). The polypeptide is Glycine--tRNA ligase (Staphylococcus aureus (strain bovine RF122 / ET3-1)).